We begin with the raw amino-acid sequence, 101 residues long: Small ribosomal subunit protein uS14 (101 aa).

This sequence belongs to the universal ribosomal protein uS14 family. Part of the 30S ribosomal subunit. Contacts proteins S3 and S10.

In terms of biological role, binds 16S rRNA, required for the assembly of 30S particles and may also be responsible for determining the conformation of the 16S rRNA at the A site. The chain is Small ribosomal subunit protein uS14 from Histophilus somni (strain 2336) (Haemophilus somnus).